We begin with the raw amino-acid sequence, 247 residues long: 5'-nucleotidase SurE (247 aa).

A divalent metal cation contacts are provided by aspartate 8, aspartate 9, serine 39, and asparagine 91.

It belongs to the SurE nucleotidase family. The cofactor is a divalent metal cation.

The protein resides in the cytoplasm. It catalyses the reaction a ribonucleoside 5'-phosphate + H2O = a ribonucleoside + phosphate. Its function is as follows. Nucleotidase that shows phosphatase activity on nucleoside 5'-monophosphates. In Methylobacillus flagellatus (strain ATCC 51484 / DSM 6875 / VKM B-1610 / KT), this protein is 5'-nucleotidase SurE.